Consider the following 403-residue polypeptide: Alkaline protease 1 (403 aa).

Residues 1–21 (MLSIKRTLLLLGAVLPAVFGA) form the signal peptide. Positions 22-125 (PVQETRRAAQ…QIWYLDALTT (104 aa)) are excised as a propeptide. The region spanning 36–120 (KYIVTFKPGT…HVEEDQIWYL (85 aa)) is the Inhibitor I9 domain. Residues 130–403 (PWGLGSISHK…PNKLAYNGNA (274 aa)) enclose the Peptidase S8 domain. Active-site charge relay system residues include Asp162 and His193. N-linked (GlcNAc...) asparagine glycans are attached at residues Asn253 and Asn307. The active-site Charge relay system is the Ser349. An N-linked (GlcNAc...) asparagine glycan is attached at Asn367.

The protein belongs to the peptidase S8 family.

It is found in the secreted. It carries out the reaction Hydrolysis of proteins with broad specificity, and of Bz-Arg-OEt &gt; Ac-Tyr-OEt. Does not hydrolyze peptide amides.. Secreted alkaline protease that allows assimilation of proteinaceous substrates. Acts as a significant virulence factor in invasive aspergillosis. Involved in immune evasion from the human and mice complement systems during infection. Efficiently cleaves important components of the complement cascade such as such as C3, C4, C5, and C1q, as well as IgG, which leads to down-regulation of complement activation at the hyphal surface. The sequence is that of Alkaline protease 1 (alp1) from Aspergillus fumigatus (strain CBS 144.89 / FGSC A1163 / CEA10) (Neosartorya fumigata).